The chain runs to 409 residues: NADH-quinone oxidoreductase subunit D (409 aa).

It belongs to the complex I 49 kDa subunit family. As to quaternary structure, NDH-1 is composed of 14 different subunits. Subunits NuoB, C, D, E, F, and G constitute the peripheral sector of the complex.

Its subcellular location is the cell inner membrane. It carries out the reaction a quinone + NADH + 5 H(+)(in) = a quinol + NAD(+) + 4 H(+)(out). NDH-1 shuttles electrons from NADH, via FMN and iron-sulfur (Fe-S) centers, to quinones in the respiratory chain. The immediate electron acceptor for the enzyme in this species is believed to be ubiquinone. Couples the redox reaction to proton translocation (for every two electrons transferred, four hydrogen ions are translocated across the cytoplasmic membrane), and thus conserves the redox energy in a proton gradient. The sequence is that of NADH-quinone oxidoreductase subunit D from Campylobacter curvus (strain 525.92).